Reading from the N-terminus, the 348-residue chain is Acetylesterase (348 aa).

Residues 1-16 (MRSILVIPSFVAVLNA) form the signal peptide. 5 N-linked (GlcNAc...) asparagine glycosylation sites follow: Asn64, Asn165, Asn218, Asn223, and Asn297.

Belongs to the carbohydrate esterase CE16 family. Post-translationally, N-glycosylated.

The protein localises to the secreted. It carries out the reaction an acetyl ester + H2O = an aliphatic alcohol + acetate + H(+). In terms of biological role, acetylesterase that acts as an exo-deacetylase. Shows activity towards naphtyl acetate, triacetin, as well as towards glucose- and xylose acetates. Liberates acetic acid from xylo-oligomers. The polypeptide is Acetylesterase (Hypocrea jecorina (Trichoderma reesei)).